The primary structure comprises 552 residues: Cleavage and polyadenylation specificity factor subunit 6 (552 aa).

A necessary for interaction with NXF1 region spans residues 1 to 213; the sequence is MADGVDHIDI…RGRFPGAVPG (213 aa). In terms of domain architecture, RRM spans 81–161; the sequence is IALYIGNLTR…QNPVVTPCNK (81 aa). Residues 81–161 form a necessary for interaction with NUDT21/CPSF5 region; that stretch reads IALYIGNLTR…QNPVVTPCNK (81 aa). The tract at residues 81–161 is necessary for nuclear paraspeckles localization; it reads IALYIGNLTR…QNPVVTPCNK (81 aa). Thr157 carries the post-translational modification Phosphothreonine. The span at 169–180 shows a compositional bias: polar residues; that stretch reads MQSRKTTQSGQM. Disordered stretches follow at residues 169-411 and 479-552; these read MQSR…PLSE and GIES…YRHR. Residues 202 to 206 carry the GAR motif; it reads RGRGR. Residues 207–219 are compositionally biased toward low complexity; that stretch reads FPGAVPGGDRFPG. Composition is skewed to pro residues over residues 220 to 265, 285 to 366, and 377 to 388; these read PTGP…PLAG, GQPP…PPPT, and GPPPTDPYGRPP. Residues 389 to 404 are compositionally biased toward basic and acidic residues; sequence PYDRGDYGPPGREMDT. Phosphothreonine occurs at positions 404 and 407. The segment at 404–552 is sufficient for nuclear speckle localization; the sequence is TARTPLSEAE…RDREREYRHR (149 aa). The interval 405–552 is necessary for RNA-binding; sequence ARTPLSEAEF…RDREREYRHR (148 aa). A necessary for interaction with SRSF3, SRSF7 and TRA2B/SFRS10 region spans residues 481-552; the sequence is ESKSYGSGSR…RDREREYRHR (72 aa). The tract at residues 491–552 is arg/Ser-rich domain; it reads RRERSRERDH…RDREREYRHR (62 aa). Over residues 494 to 504 the composition is skewed to basic and acidic residues; the sequence is RSRERDHSRSR. Residues Ser495, Ser501, Ser512, Ser514, and Ser526 each carry the phosphoserine modification. Basic residues predominate over residues 505–515; the sequence is EKSRRHKSRSR. The interval 511–552 is sufficient for nuclear targeting; sequence KSRSRDRHDDYYRERSRERERHRDRDRDRDRERDREREYRHR. Over residues 516-552 the composition is skewed to basic and acidic residues; it reads DRHDDYYRERSRERERHRDRDRDRDRERDREREYRHR.

Belongs to the RRM CPSF6/7 family. In terms of assembly, component of the cleavage factor Im (CFIm) complex which is a heterotetramer composed of two subunits of NUDT21/CPSF5 and two subunits of CPSF6 or CPSF7 or a heterodimer of CPSF6 and CPSF7. The cleavage factor Im (CFIm) complex associates with the CPSF and CSTF complexes to promote the assembly of the core mRNA 3'-processing machinery. Associates with the exon junction complex (EJC). Associates with the 80S ribosome particle. Interacts (via the RRM domain) with NUDT21/CPSF5; this interaction is direct and enhances binding to RNA. Interacts (via Arg/Ser-rich domain) with FIP1L1 (preferentially via unphosphorylated form and Arg/Glu/Asp-rich domain); this interaction mediates, at least in part, the interaction between the CFIm and CPSF complexes and may be inhibited by CPSF6 hyper-phosphorylation. Interacts (via N-terminus) with NXF1; this interaction is direct. Interacts with SRSF3. Interacts with SRSF7. Interacts with SNRNP70. Interacts with TRA2B/SFRS10. Interacts with UPF1. Interacts with UPF3B. Interacts with VIRMA. Interacts (via Arg/Ser-rich domain) with TNPO3; promoting nuclear import of CPSF6 independently of its phosphorylation status. Interacts with YTHDC1. In terms of processing, phosphorylated. Phosphorylated in the Arg/Ser-rich domain by SRPK1, in vitro. Post-translationally, symmetrically dimethylated on arginine residues in the GAR motif by PRMT5 in a WDR77- and CLNS1A-dependent manner. Asymmetrically dimethylated on arginine residues in the GAR motif by PRMT1.

The protein resides in the nucleus. It localises to the nucleoplasm. It is found in the nucleus speckle. Its subcellular location is the cytoplasm. Component of the cleavage factor Im (CFIm) complex that functions as an activator of the pre-mRNA 3'-end cleavage and polyadenylation processing required for the maturation of pre-mRNA into functional mRNAs. CFIm contributes to the recruitment of multiprotein complexes on specific sequences on the pre-mRNA 3'-end, so called cleavage and polyadenylation signals (pA signals). Most pre-mRNAs contain multiple pA signals, resulting in alternative cleavage and polyadenylation (APA) producing mRNAs with variable 3'-end formation. The CFIm complex acts as a key regulator of cleavage and polyadenylation site choice during APA through its binding to 5'-UGUA-3' elements localized in the 3'-untranslated region (UTR) for a huge number of pre-mRNAs. CPSF6 enhances NUDT21/CPSF5 binding to 5'-UGUA-3' elements localized upstream of pA signals and promotes RNA looping, and hence activates directly the mRNA 3'-processing machinery. Plays a role in mRNA export. The chain is Cleavage and polyadenylation specificity factor subunit 6 from Pongo abelii (Sumatran orangutan).